Consider the following 394-residue polypeptide: Elongation factor Tu (394 aa).

One can recognise a tr-type G domain in the interval 10-204 (KPHVNIGTIG…AVDSYIPQPV (195 aa)). The tract at residues 19-26 (GHVDHGKT) is G1. 19-26 (GHVDHGKT) lines the GTP pocket. T26 contributes to the Mg(2+) binding site. The G2 stretch occupies residues 60 to 64 (GITIS). Residues 81–84 (DCPG) are G3. GTP is bound by residues 81–85 (DCPGH) and 136–139 (NKVD). The G4 stretch occupies residues 136–139 (NKVD). The interval 174 to 176 (SAL) is G5.

It belongs to the TRAFAC class translation factor GTPase superfamily. Classic translation factor GTPase family. EF-Tu/EF-1A subfamily. In terms of assembly, monomer.

The protein resides in the cytoplasm. The catalysed reaction is GTP + H2O = GDP + phosphate + H(+). In terms of biological role, GTP hydrolase that promotes the GTP-dependent binding of aminoacyl-tRNA to the A-site of ribosomes during protein biosynthesis. The polypeptide is Elongation factor Tu (Rickettsia felis (strain ATCC VR-1525 / URRWXCal2) (Rickettsia azadi)).